A 98-amino-acid chain; its full sequence is Cytochrome c-552 (98 aa).

The first 18 residues, 1–18 (MKKFLLVAVVGLAGITFA), serve as a signal peptide directing secretion. The heme c site is built by C28, C31, H32, and M77.

Belongs to the cytochrome c family. Binds 1 heme c group covalently per subunit.

Its function is as follows. Reacts with hydrogenase. This chain is Cytochrome c-552, found in Hydrogenobacter thermophilus (strain DSM 6534 / IAM 12695 / TK-6).